The primary structure comprises 521 residues: Myocyte-specific enhancer factor 2D (521 aa).

The MADS-box domain occupies 3–57 (RKKIQIQRITDERNRQVTFTKRKFGLMKKAYELSVLCDCEIALIIFNHSNKLFQY). Residues 58–86 (ASTDMDKVLLKYTEYNEPHESRTNADIIE) constitute a DNA-binding region (mef2-type). Phosphoserine occurs at positions 98, 106, and 110. Ser-121 bears the Phosphoserine; by PKA mark. A disordered region spans residues 174-207 (TDPRLLSPQQPALQRNSVSPGLPQRPASAGAMLG). Ser-180 carries the post-translational modification Phosphoserine; by MAPK7. A compositionally biased stretch (polar residues) spans 180-192 (SPQQPALQRNSVS). Residue Ser-190 is modified to Phosphoserine; by PKA. Ser-231 is subject to Phosphoserine. Positions 244-266 (NKVIPAKSPPPPTHSTQLGAPSR) are disordered. Residue Lys-245 is modified to N6-acetyllysine. Ser-251 carries the post-translational modification Phosphoserine. The interval 286 to 292 (TEDHLDL) is beta domain. 2 disordered regions span residues 357–407 (SLGN…QSHL) and 437–521 (SIKS…WTLK). The segment covering 373–400 (PQQPQPPQQQPPQPQQPQPQQPQQPQQP) has biased composition (pro residues). An N6-acetyllysine; alternate modification is found at Lys-439. Lys-439 participates in a covalent cross-link: Glycyl lysine isopeptide (Lys-Gly) (interchain with G-Cter in SUMO); alternate. Ser-444 is modified (phosphoserine).

This sequence belongs to the MEF2 family. As to quaternary structure, interacts with MYOG. Forms a complex with class II HDACs in undifferentiating cells. On myogenic differentiation, HDACs are released into the cytoplasm allowing MEF2s to interact with other proteins for activation. Interacts with HDAC4 (in undifferentiating cells); the interaction translocates MEF2D to nuclear dots. Forms a heterodimer with MEF2A. Interacts with MAPK7; the interaction phosphorylates but does not activate MEF2D. Interacts with CCAR2 and HDAC3. Phosphorylated on Ser-444 by CDK5 is required for Lys-439 sumoylation and inhibits transcriptional activity. In neurons, enhanced CDK5 activity induced by neurotoxins promotes caspase 3-mediated cleavage leading to neuron apoptosis. Phosphorylation on Ser-180 can be enhanced by EGF. Phosphorylated and activated by CaMK4. In terms of processing, acetylated on Lys-439 by CREBBP. Acetylated by EP300. Deacetylated by SIRT1 and HDAC3. Post-translationally, sumoylated on Lys-439 with SUMO2 but not SUMO1; which inhibits transcriptional activity and myogenic activity. Desumoylated by SENP3. Proteolytically cleaved in cerebellar granule neurons on several sites by caspase 7 following neurotoxicity. Preferentially cleaves the CDK5-mediated hyperphosphorylated form which leads to neuron apoptosis and transcriptional inactivation.

The protein localises to the nucleus. Functionally, transcriptional activator which binds specifically to the MEF2 element, 5'-YTA[AT](4)TAR-3', found in numerous muscle-specific, growth factor- and stress-induced genes. Mediates cellular functions not only in skeletal and cardiac muscle development, but also in neuronal differentiation and survival. Plays diverse roles in the control of cell growth, survival and apoptosis via p38 MAPK signaling in muscle-specific and/or growth factor-related transcription. Plays a critical role in the regulation of neuronal apoptosis. The polypeptide is Myocyte-specific enhancer factor 2D (MEF2D) (Homo sapiens (Human)).